The sequence spans 169 residues: S-ribosylhomocysteine lyase (169 aa).

Residues histidine 54, histidine 58, and cysteine 128 each coordinate Fe cation.

This sequence belongs to the LuxS family. As to quaternary structure, homodimer. Requires Fe cation as cofactor.

It carries out the reaction S-(5-deoxy-D-ribos-5-yl)-L-homocysteine = (S)-4,5-dihydroxypentane-2,3-dione + L-homocysteine. Functionally, involved in the synthesis of autoinducer 2 (AI-2) which is secreted by bacteria and is used to communicate both the cell density and the metabolic potential of the environment. The regulation of gene expression in response to changes in cell density is called quorum sensing. Catalyzes the transformation of S-ribosylhomocysteine (RHC) to homocysteine (HC) and 4,5-dihydroxy-2,3-pentadione (DPD). In Shewanella sp. (strain MR-4), this protein is S-ribosylhomocysteine lyase.